The sequence spans 296 residues: MHTRFENAFQQLSASLQDALGPLIDKPDFAAMLTADEVNAVCEASQLDVDALAFALLPLAAACAQASISNFQVGAIAQGLSGNFYFGANMEFTAVQLQQTVHAEQSAVSHAWLRNERGLRAVTVNYTPCGHCRQFMNELRNAASLRIQLPGRQPAVLSHYLPDAFGPVDLQIDTLLMDDINHGATLQNVNALTRQALDAANRSHAPYSKAISGIALETASGNIYTGRYAENAAFNPSLPPLQAALNLMNLAGEDPSTIKYAAVVERRNAVVSHWAISQIMLAELGCTDVEHHFIEE.

2 consecutive CMP/dCMP-type deaminase domains span residues aspartate 48–valine 168 and glutamine 187–glutamate 296. Position 89 to 91 (asparagine 89 to glutamate 91) interacts with substrate. Position 102 (histidine 102) interacts with Zn(2+). Glutamate 104 (proton donor) is an active-site residue. The Zn(2+) site is built by cysteine 129 and cysteine 132.

The protein belongs to the cytidine and deoxycytidylate deaminase family. As to quaternary structure, homodimer. It depends on Zn(2+) as a cofactor.

The catalysed reaction is cytidine + H2O + H(+) = uridine + NH4(+). The enzyme catalyses 2'-deoxycytidine + H2O + H(+) = 2'-deoxyuridine + NH4(+). This enzyme scavenges exogenous and endogenous cytidine and 2'-deoxycytidine for UMP synthesis. The polypeptide is Cytidine deaminase (Pectobacterium atrosepticum (strain SCRI 1043 / ATCC BAA-672) (Erwinia carotovora subsp. atroseptica)).